A 159-amino-acid polypeptide reads, in one-letter code: 2-C-methyl-D-erythritol 2,4-cyclodiphosphate synthase (159 aa).

A divalent metal cation-binding residues include Asp10 and His12. Residues 10-12 and 36-37 each bind 4-CDP-2-C-methyl-D-erythritol 2-phosphate; these read DVH and HS. A divalent metal cation is bound at residue His44. Residues 58 to 60, 134 to 137, Phe141, and Arg144 contribute to the 4-CDP-2-C-methyl-D-erythritol 2-phosphate site; these read DIG and TTTE.

It belongs to the IspF family. Homotrimer. A divalent metal cation serves as cofactor.

It catalyses the reaction 4-CDP-2-C-methyl-D-erythritol 2-phosphate = 2-C-methyl-D-erythritol 2,4-cyclic diphosphate + CMP. Its pathway is isoprenoid biosynthesis; isopentenyl diphosphate biosynthesis via DXP pathway; isopentenyl diphosphate from 1-deoxy-D-xylulose 5-phosphate: step 4/6. In terms of biological role, involved in the biosynthesis of isopentenyl diphosphate (IPP) and dimethylallyl diphosphate (DMAPP), two major building blocks of isoprenoid compounds. Catalyzes the conversion of 4-diphosphocytidyl-2-C-methyl-D-erythritol 2-phosphate (CDP-ME2P) to 2-C-methyl-D-erythritol 2,4-cyclodiphosphate (ME-CPP) with a corresponding release of cytidine 5-monophosphate (CMP). This is 2-C-methyl-D-erythritol 2,4-cyclodiphosphate synthase from Bacteroides thetaiotaomicron (strain ATCC 29148 / DSM 2079 / JCM 5827 / CCUG 10774 / NCTC 10582 / VPI-5482 / E50).